The primary structure comprises 568 residues: Proline--tRNA ligase (568 aa).

The protein belongs to the class-II aminoacyl-tRNA synthetase family. ProS type 1 subfamily. In terms of assembly, homodimer.

The protein localises to the cytoplasm. It carries out the reaction tRNA(Pro) + L-proline + ATP = L-prolyl-tRNA(Pro) + AMP + diphosphate. Catalyzes the attachment of proline to tRNA(Pro) in a two-step reaction: proline is first activated by ATP to form Pro-AMP and then transferred to the acceptor end of tRNA(Pro). As ProRS can inadvertently accommodate and process non-cognate amino acids such as alanine and cysteine, to avoid such errors it has two additional distinct editing activities against alanine. One activity is designated as 'pretransfer' editing and involves the tRNA(Pro)-independent hydrolysis of activated Ala-AMP. The other activity is designated 'posttransfer' editing and involves deacylation of mischarged Ala-tRNA(Pro). The misacylated Cys-tRNA(Pro) is not edited by ProRS. The chain is Proline--tRNA ligase from Lysinibacillus sphaericus (strain C3-41).